Reading from the N-terminus, the 350-residue chain is MNNEKMKALQAAITQIEKQFGKGSVMKLGEEHVLNVEAISTGSLSLDIALGIGGIPRGRIIEIFGPESSGKTTVALHIIAEAQKSGGTAAFIDAEHALDPVYAKALGVDIDNLIVSQPDTGEQALEICEALVRSGAIDVIVVDSVAALVPKAEIEGEMGDSHVGLQARLMSQALRKLTGSINKSKCATIFINQLREKVGIMFGNPETTPGGRALKFYSSVRLDVRKIETIKQGDEFLGSRTRVKVVKNKVAPPFKQAEFDIMYGTGISFEGNVLDVGVDNEIIQKSGSWFSYNDTRLGQGRENVKQFLRENPSILLEVENKIREKHNLKTRNTADSKVTGAKDEKSKEEK.

Residue 65–72 (GPESSGKT) coordinates ATP. Positions 326-350 (HNLKTRNTADSKVTGAKDEKSKEEK) are disordered. Residues 340–350 (GAKDEKSKEEK) show a composition bias toward basic and acidic residues.

Belongs to the RecA family.

The protein localises to the cytoplasm. Functionally, can catalyze the hydrolysis of ATP in the presence of single-stranded DNA, the ATP-dependent uptake of single-stranded DNA by duplex DNA, and the ATP-dependent hybridization of homologous single-stranded DNAs. It interacts with LexA causing its activation and leading to its autocatalytic cleavage. In Clostridium novyi (strain NT), this protein is Protein RecA.